The chain runs to 108 residues: Hrp pili protein HrpA (108 aa).

Residues 41–56 show a composition bias toward polar residues; that stretch reads NTGSTDSIDATRSSIS. A disordered region spans residues 41–73; the sequence is NTGSTDSIDATRSSISKGDAKSAELDGTANEEN.

This sequence belongs to the HrpA type 1 family.

Its subcellular location is the secreted. The protein resides in the fimbrium. Its function is as follows. Major structural protein of the hrp pilus, which is a component of the type III secretion system (T3SS, Hrp secretion system) required for effector protein delivery, parasitism, and pathogenicity. The hrp pilus functions as a conduit for protein delivery into the host cell. Also, affects the expression of T3SS-associated genes. Required for full expression of genes that encode regulatory, secretion, and effector proteins of the T3SS. HrpA-mediated gene regulation apparently is through effect on the mRNA level of HrpR and HrpS. The protein is Hrp pili protein HrpA (hrpA) of Pseudomonas syringae pv. syringae.